Reading from the N-terminus, the 230-residue chain is Ephrin-A3 (230 aa).

An N-terminal signal peptide occupies residues 1-22 (MAAAPLLLLLLLVPVPLLPLLA). Residues 30-161 (GNRHAVYWNS…RMKVFVCCAS (132 aa)) form the Ephrin RBD domain. 4 N-linked (GlcNAc...) asparagine glycosylation sites follow: Asn-38, Asn-67, Asn-84, and Asn-92. Disulfide bonds link Cys-63–Cys-102 and Cys-91–Cys-150. Gly-206 is lipidated: GPI-anchor amidated glycine. Positions 207–230 (TSPKREHLPLAVGIAFFLMTLLAS) are cleaved as a propeptide — removed in mature form.

It belongs to the ephrin family. As to quaternary structure, interacts with EPHA8; activates EPHA8. In terms of tissue distribution, expressed in myogenic progenitor cells.

It localises to the cell membrane. In terms of biological role, cell surface GPI-bound ligand for Eph receptors, a family of receptor tyrosine kinases which are crucial for migration, repulsion and adhesion during neuronal, vascular and epithelial development. Binds promiscuously Eph receptors residing on adjacent cells, leading to contact-dependent bidirectional signaling into neighboring cells. The signaling pathway downstream of the receptor is referred to as forward signaling while the signaling pathway downstream of the ephrin ligand is referred to as reverse signaling. In Mus musculus (Mouse), this protein is Ephrin-A3 (Efna3).